Here is a 483-residue protein sequence, read N- to C-terminus: Glutamate mutase epsilon subunit (483 aa).

Arg66 is a binding site for L-glutamate. Position 68 (Gly68) interacts with adenosylcob(III)alamin. Residue Arg100 participates in L-glutamate binding. Asn123 is a binding site for adenosylcob(III)alamin. Residues 149 to 150 (RH), Glu171, and Tyr177 each bind L-glutamate. Position 180 (Pro180) interacts with adenosylcob(III)alamin. Tyr181 is an L-glutamate binding site. 4 residues coordinate adenosylcob(III)alamin: Phe297, Lys326, Glu330, and Ile334.

This sequence belongs to the methylaspartate mutase GlmE subunit family. In terms of assembly, heterotetramer composed of 2 epsilon subunits (GlmE) and 2 sigma subunits (GlmS). GlmE exists as a homodimer and GlmS as a monomer. Requires adenosylcob(III)alamin as cofactor.

It catalyses the reaction (2S,3S)-3-methyl-L-aspartate = L-glutamate. It functions in the pathway amino-acid degradation; L-glutamate degradation via mesaconate pathway; acetate and pyruvate from L-glutamate: step 1/4. Competitively inhibited by (2S,4S)-4-fluoroglutamate, 2-methyleneglutarate, (2R,3RS)-3-fluoroglutamate and (S)-3-methylitaconate. Functionally, catalyzes the carbon skeleton rearrangement of L-glutamate to L-threo-3-methylaspartate ((2S,3S)-3-methylaspartate). This chain is Glutamate mutase epsilon subunit, found in Clostridium cochlearium.